A 256-amino-acid polypeptide reads, in one-letter code: MKIITCYKCVPDEQDIAVNNADGSLDFSKADAKISQYDLNAIEAACQLKQQAAEAQVTALSVGGKALTNAKGRKDVLSRGPDELIVVIDDQFEQALPQQTATALAAAAQKAGFDLILCGDGSSDLYAQQVGLLVGEILDIPVVNGVSKIISLTTDTLTVERELEDETETLSIPLPAVVAVSTDINSPQIPSMKAILGAAKKPVQVWSAADIGFNAVEAWSEQQVAAPKQRERQRIVIEGDGEEQIAAFAENLRKVI.

The protein belongs to the ETF beta-subunit/FixA family. As to quaternary structure, heterodimer of FixA and FixB.

It functions in the pathway amine and polyamine metabolism; carnitine metabolism. Required for anaerobic carnitine reduction. May bring reductant to CaiA. In Escherichia fergusonii (strain ATCC 35469 / DSM 13698 / CCUG 18766 / IAM 14443 / JCM 21226 / LMG 7866 / NBRC 102419 / NCTC 12128 / CDC 0568-73), this protein is Protein FixA.